The sequence spans 372 residues: CXADR-like membrane protein (372 aa).

The N-terminal stretch at 1–17 (MSLFFLWLVTYYVGTLG) is a signal peptide. 2 consecutive Ig-like C2-type domains span residues 18–126 (THTE…VILK) and 134–223 (PKCE…VRVT). The Extracellular segment spans residues 18 to 234 (THTEIKRVAE…QYVQSIGMVA (217 aa)). 2 disulfide bridges follow: Cys-34–Cys-110 and Cys-152–Cys-207. 2 N-linked (GlcNAc...) asparagine glycosylation sites follow: Asn-73 and Asn-196. Residues 235-255 (GAVTGIVAGALLIFLLIWLLI) traverse the membrane as a helical segment. Residues 256–372 (RRKSKERYEE…PSQSRAFQTV (117 aa)) are Cytoplasmic-facing. Basic and acidic residues predominate over residues 263-280 (YEEEDRPNEIREDAEAPR). The interval 263 to 372 (YEEEDRPNEI…PSQSRAFQTV (110 aa)) is disordered. Low complexity-rich tracts occupy residues 287-313 (SSSSSGSRSSRSGSSSTRSTGNSASRS) and 352-361 (LTKAETTLST). The span at 362–372 (MPSQSRAFQTV) shows a compositional bias: polar residues.

Predominantly expressed in the white adipose tissue.

It localises to the cell junction. Its subcellular location is the tight junction. It is found in the cell membrane. May be involved in the cell-cell adhesion. May play a role in adipocyte differentiation and development of obesity. Is required for normal small intestine development. The chain is CXADR-like membrane protein (Clmp) from Rattus norvegicus (Rat).